Here is a 781-residue protein sequence, read N- to C-terminus: Molybdenum cofactor sulfurase (781 aa).

Lys-246 carries the post-translational modification N6-(pyridoxal phosphate)lysine. Cys-413 is an active-site residue. An MOSC domain is found at 619–781; that stretch reads GDAVAQWLSE…MTCGDVVIVE (163 aa). Phosphoserine is present on Ser-734.

The protein belongs to the class-V pyridoxal-phosphate-dependent aminotransferase family. MOCOS subfamily. Pyridoxal 5'-phosphate serves as cofactor.

It catalyses the reaction Mo-molybdopterin + L-cysteine + AH2 = thio-Mo-molybdopterin + L-alanine + A + H2O. Its pathway is cofactor biosynthesis; molybdopterin biosynthesis. In terms of biological role, sulfurates the molybdenum cofactor. Sulfation of molybdenum is essential for xanthine dehydrogenase (XDH) and aldehyde oxidase (ADO) enzymes in which molybdenum cofactor is liganded by 1 oxygen and 1 sulfur atom in active form. The sequence is that of Molybdenum cofactor sulfurase from Drosophila erecta (Fruit fly).